The chain runs to 485 residues: Leukocyte receptor cluster member 9 (485 aa).

Residues 8–35 (SEAPAVCRFFLEGRCRFGARCRQPHPGA) form a C3H1-type zinc finger. A disordered region spans residues 212-247 (ETRTGLDSSLETPEVDGPTKETGLNGTTELEMPDPS).

This is Leukocyte receptor cluster member 9 (Leng9) from Mus musculus (Mouse).